The chain runs to 247 residues: Pulmonary surfactant-associated protein A (247 aa).

Positions 1 to 15 (MLLLSLALTLISAPA) are cleaved as a signal peptide. One can recognise a Collagen-like domain in the interval 27-99 (GSPGIPGTPG…PGERGPPGLP (73 aa)). 9 positions are modified to 4-hydroxyproline: Pro29, Pro32, Pro35, Pro41, Pro53, Pro56, Pro62, Pro66, and Pro69. Positions 30-100 (GIPGTPGSHG…GERGPPGLPA (71 aa)) are disordered. Residues 41–50 (PGRDGRDGVK) are compositionally biased toward basic and acidic residues. Residues 53–64 (PGPPGPMGPPGG) show a composition bias toward pro residues. Over residues 83 to 92 (ERGDKGEPGE) the composition is skewed to basic and acidic residues. Residues 132-247 (AVGEKIFSTN…LQYRLVICEF (116 aa)) form the C-type lectin domain. 2 cysteine pairs are disulfide-bonded: Cys154–Cys245 and Cys223–Cys237. An N-linked (GlcNAc...) asparagine glycan is attached at Asn206. 4 residues coordinate Ca(2+): Glu214, Arg216, Asn233, and Asp234.

It belongs to the SFTPA family. In terms of assembly, oligomeric complex of 6 set of homotrimers.

It localises to the secreted. It is found in the extracellular space. The protein resides in the extracellular matrix. Its subcellular location is the surface film. Its function is as follows. In presence of calcium ions, it binds to surfactant phospholipids and contributes to lower the surface tension at the air-liquid interface in the alveoli of the mammalian lung and is essential for normal respiration. Enhances the expression of MYO18A/SP-R210 on alveolar macrophages. The protein is Pulmonary surfactant-associated protein A (SFTPA1) of Oryctolagus cuniculus (Rabbit).